We begin with the raw amino-acid sequence, 380 residues long: Erythronate-4-phosphate dehydrogenase (380 aa).

Residues S45 and T66 each coordinate substrate. NAD(+) is bound by residues D146 and T174. R207 is a catalytic residue. D231 contributes to the NAD(+) binding site. The active site involves E236. H253 functions as the Proton donor in the catalytic mechanism. Position 256 (G256) interacts with NAD(+). Y257 contributes to the substrate binding site.

It belongs to the D-isomer specific 2-hydroxyacid dehydrogenase family. PdxB subfamily. Homodimer.

Its subcellular location is the cytoplasm. It carries out the reaction 4-phospho-D-erythronate + NAD(+) = (R)-3-hydroxy-2-oxo-4-phosphooxybutanoate + NADH + H(+). It functions in the pathway cofactor biosynthesis; pyridoxine 5'-phosphate biosynthesis; pyridoxine 5'-phosphate from D-erythrose 4-phosphate: step 2/5. Functionally, catalyzes the oxidation of erythronate-4-phosphate to 3-hydroxy-2-oxo-4-phosphonooxybutanoate. This Pseudomonas fluorescens (strain ATCC BAA-477 / NRRL B-23932 / Pf-5) protein is Erythronate-4-phosphate dehydrogenase.